Consider the following 1046-residue polypeptide: uncharacterized protein (1046 aa).

Positions 594–615 (LNSIPSDSSSSGSSRKSSPRGS) are enriched in low complexity. Positions 594-622 (LNSIPSDSSSSGSSRKSSPRGSPNLGEAP) are disordered.

This is an uncharacterized protein from Invertebrate iridescent virus 6 (IIV-6).